Reading from the N-terminus, the 361-residue chain is Holliday junction branch migration complex subunit RuvB (361 aa).

Basic and acidic residues-rich tracts occupy residues 1–13 and 33–43; these read MSDV…KLPE and QGEHDIERSLR. The tract at residues 1–43 is disordered; the sequence is MSDVERTEFKLPEGMDLSSPPQRNQDVDAAEQQGEHDIERSLR. The segment at 2–203 is large ATPase domain (RuvB-L); the sequence is SDVERTEFKL…FGFTAQMEYY (202 aa). ATP-binding positions include Leu42, Arg43, Gly84, Lys87, Thr88, Thr89, 150–152, Arg193, Tyr203, and Arg240; that span reads EDF. Thr88 contacts Mg(2+). Positions 204–274 are small ATPAse domain (RuvB-S); it reads DTEDLTRVIS…AAQAALRVFD (71 aa). Residues 277–361 are head domain (RuvB-H); it reads ERGLDRLDRA…PEGAIGGTLF (85 aa). Residues Arg332 and Arg337 each coordinate DNA.

Belongs to the RuvB family. As to quaternary structure, homohexamer. Forms an RuvA(8)-RuvB(12)-Holliday junction (HJ) complex. HJ DNA is sandwiched between 2 RuvA tetramers; dsDNA enters through RuvA and exits via RuvB. An RuvB hexamer assembles on each DNA strand where it exits the tetramer. Each RuvB hexamer is contacted by two RuvA subunits (via domain III) on 2 adjacent RuvB subunits; this complex drives branch migration. In the full resolvosome a probable DNA-RuvA(4)-RuvB(12)-RuvC(2) complex forms which resolves the HJ.

It localises to the cytoplasm. It carries out the reaction ATP + H2O = ADP + phosphate + H(+). The RuvA-RuvB-RuvC complex processes Holliday junction (HJ) DNA during genetic recombination and DNA repair, while the RuvA-RuvB complex plays an important role in the rescue of blocked DNA replication forks via replication fork reversal (RFR). RuvA specifically binds to HJ cruciform DNA, conferring on it an open structure. The RuvB hexamer acts as an ATP-dependent pump, pulling dsDNA into and through the RuvAB complex. RuvB forms 2 homohexamers on either side of HJ DNA bound by 1 or 2 RuvA tetramers; 4 subunits per hexamer contact DNA at a time. Coordinated motions by a converter formed by DNA-disengaged RuvB subunits stimulates ATP hydrolysis and nucleotide exchange. Immobilization of the converter enables RuvB to convert the ATP-contained energy into a lever motion, pulling 2 nucleotides of DNA out of the RuvA tetramer per ATP hydrolyzed, thus driving DNA branch migration. The RuvB motors rotate together with the DNA substrate, which together with the progressing nucleotide cycle form the mechanistic basis for DNA recombination by continuous HJ branch migration. Branch migration allows RuvC to scan DNA until it finds its consensus sequence, where it cleaves and resolves cruciform DNA. The sequence is that of Holliday junction branch migration complex subunit RuvB from Corynebacterium aurimucosum (strain ATCC 700975 / DSM 44827 / CIP 107346 / CN-1) (Corynebacterium nigricans).